Consider the following 486-residue polypeptide: Pentatricopeptide repeat-containing protein At3g06430, chloroplastic (486 aa).

A chloroplast-targeting transit peptide spans Met-1–Leu-36. 10 PPR repeats span residues Lys-123–Pro-157, Thr-158–Phe-188, Asp-194–Pro-228, Asn-229–Pro-264, Asp-265–Pro-299, Glu-300–Trp-334, Thr-335–Ala-369, Asp-370–Glu-404, Asn-405–Cys-439, and Asp-440–Leu-470.

This sequence belongs to the PPR family. P subfamily.

It localises to the plastid. The protein localises to the chloroplast. This chain is Pentatricopeptide repeat-containing protein At3g06430, chloroplastic (EMB2750), found in Arabidopsis thaliana (Mouse-ear cress).